Consider the following 274-residue polypeptide: ATP synthase subunit delta (274 aa).

The protein belongs to the ATPase delta chain family. F-type ATPases have 2 components, F(1) - the catalytic core - and F(0) - the membrane proton channel. F(1) has five subunits: alpha(3), beta(3), gamma(1), delta(1), epsilon(1). F(0) has three main subunits: a(1), b(2) and c(10-14). The alpha and beta chains form an alternating ring which encloses part of the gamma chain. F(1) is attached to F(0) by a central stalk formed by the gamma and epsilon chains, while a peripheral stalk is formed by the delta and b chains.

It localises to the cell membrane. F(1)F(0) ATP synthase produces ATP from ADP in the presence of a proton or sodium gradient. F-type ATPases consist of two structural domains, F(1) containing the extramembraneous catalytic core and F(0) containing the membrane proton channel, linked together by a central stalk and a peripheral stalk. During catalysis, ATP synthesis in the catalytic domain of F(1) is coupled via a rotary mechanism of the central stalk subunits to proton translocation. In terms of biological role, this protein is part of the stalk that links CF(0) to CF(1). It either transmits conformational changes from CF(0) to CF(1) or is implicated in proton conduction. This chain is ATP synthase subunit delta, found in Corynebacterium efficiens (strain DSM 44549 / YS-314 / AJ 12310 / JCM 11189 / NBRC 100395).